Here is a 318-residue protein sequence, read N- to C-terminus: ATP phosphoribosyltransferase regulatory subunit (318 aa).

Belongs to the class-II aminoacyl-tRNA synthetase family. HisZ subfamily. Heteromultimer composed of HisG and HisZ subunits.

The protein localises to the cytoplasm. It functions in the pathway amino-acid biosynthesis; L-histidine biosynthesis; L-histidine from 5-phospho-alpha-D-ribose 1-diphosphate: step 1/9. In terms of biological role, required for the first step of histidine biosynthesis. May allow the feedback regulation of ATP phosphoribosyltransferase activity by histidine. The chain is ATP phosphoribosyltransferase regulatory subunit from Lactococcus lactis subsp. cremoris (strain MG1363).